Consider the following 232-residue polypeptide: Phosphatidylserine decarboxylase proenzyme (232 aa).

Serine 190 functions as the Schiff-base intermediate with substrate; via pyruvic acid in the catalytic mechanism. Serine 190 carries the pyruvic acid (Ser); by autocatalysis modification.

It belongs to the phosphatidylserine decarboxylase family. PSD-A subfamily. In terms of assembly, heterodimer of a large membrane-associated beta subunit and a small pyruvoyl-containing alpha subunit. The cofactor is pyruvate. Is synthesized initially as an inactive proenzyme. Formation of the active enzyme involves a self-maturation process in which the active site pyruvoyl group is generated from an internal serine residue via an autocatalytic post-translational modification. Two non-identical subunits are generated from the proenzyme in this reaction, and the pyruvate is formed at the N-terminus of the alpha chain, which is derived from the carboxyl end of the proenzyme. The post-translation cleavage follows an unusual pathway, termed non-hydrolytic serinolysis, in which the side chain hydroxyl group of the serine supplies its oxygen atom to form the C-terminus of the beta chain, while the remainder of the serine residue undergoes an oxidative deamination to produce ammonia and the pyruvoyl prosthetic group on the alpha chain.

It is found in the cell membrane. It catalyses the reaction a 1,2-diacyl-sn-glycero-3-phospho-L-serine + H(+) = a 1,2-diacyl-sn-glycero-3-phosphoethanolamine + CO2. It participates in phospholipid metabolism; phosphatidylethanolamine biosynthesis; phosphatidylethanolamine from CDP-diacylglycerol: step 2/2. In terms of biological role, catalyzes the formation of phosphatidylethanolamine (PtdEtn) from phosphatidylserine (PtdSer). The protein is Phosphatidylserine decarboxylase proenzyme of Rhodopseudomonas palustris (strain BisB18).